The sequence spans 396 residues: Methionine import ATP-binding protein MetN 2 (396 aa).

The ABC transporter domain maps to 41-280 (VSFELVGKVF…PRHGATRALL (240 aa)). 77–84 (GRSGAGKS) is a binding site for ATP.

The protein belongs to the ABC transporter superfamily. Methionine importer (TC 3.A.1.24) family. In terms of assembly, the complex is composed of two ATP-binding proteins (MetN), two transmembrane proteins (MetI) and a solute-binding protein (MetQ).

It is found in the cell inner membrane. The enzyme catalyses L-methionine(out) + ATP + H2O = L-methionine(in) + ADP + phosphate + H(+). The catalysed reaction is D-methionine(out) + ATP + H2O = D-methionine(in) + ADP + phosphate + H(+). Functionally, part of the ABC transporter complex MetNIQ involved in methionine import. Responsible for energy coupling to the transport system. The sequence is that of Methionine import ATP-binding protein MetN 2 from Burkholderia pseudomallei (strain 1710b).